The sequence spans 62 residues: Small ribosomal subunit protein uS14 (62 aa).

Positions 25, 28, 41, and 44 each coordinate Zn(2+).

It belongs to the universal ribosomal protein uS14 family. Zinc-binding uS14 subfamily. Part of the 30S ribosomal subunit. Contacts proteins S3 and S10. The cofactor is Zn(2+).

Binds 16S rRNA, required for the assembly of 30S particles and may also be responsible for determining the conformation of the 16S rRNA at the A site. This is Small ribosomal subunit protein uS14 from Aquifex aeolicus (strain VF5).